Reading from the N-terminus, the 174-residue chain is Non-classical export protein 2 homolog 1 (174 aa).

The Cytoplasmic portion of the chain corresponds to 1 to 7 (MLSAADN). Residues 8–28 (LVRIINAVFLIISIGLISGLI) traverse the membrane as a helical segment. At 29-41 (GTQTKHSSRVNFC) the chain is on the extracellular side. The helical transmembrane segment at 42–62 (MFAAVYGLVTDSLYGFLANFW) threads the bilayer. The Cytoplasmic segment spans residues 63 to 69 (TSLTYPA). Residues 70–90 (ILLVLDFLNFIFTFVAATALA) form a helical membrane-spanning segment. Residues 91–122 (VGIRCHSCKNKTYLEQNKIIQGSSSRCHQSQA) are Extracellular-facing. A helical transmembrane segment spans residues 123-143 (AVAFFYFSCFLFLIKVTVATM). The Cytoplasmic portion of the chain corresponds to 144–174 (GMMQNGGFGSNTGFSRRRARRQMGIPTISQV).

It belongs to the NCE102 family.

Its subcellular location is the cell membrane. Functionally, involved in membrane organization. Required for the formation of membrane compartments of CAN1 (MCCs), localization of CAN1 at the MCCs and subsequent invagination of the plasma membrane at the MCCs sites. Involved in eisosome organization and might act as a sensor of sphingolipids that regulates plasma membrane function. Involved in a novel pathway of export of proteins that lack a cleavable signal sequence. Non-classical export pathway also functions as an alternative clearance/detoxification pathway to eliminate damaged material, when the basic repair pathway is not sufficient. In Saccharomyces cerevisiae (strain ATCC 204508 / S288c) (Baker's yeast), this protein is Non-classical export protein 2 homolog 1 (FHN1).